The primary structure comprises 86 residues: Small ribosomal subunit protein uS17 (86 aa).

It belongs to the universal ribosomal protein uS17 family. Part of the 30S ribosomal subunit.

Functionally, one of the primary rRNA binding proteins, it binds specifically to the 5'-end of 16S ribosomal RNA. The protein is Small ribosomal subunit protein uS17 of Marinomonas sp. (strain MWYL1).